The chain runs to 378 residues: Chorismate synthase (378 aa).

Arg-50 contributes to the NADP(+) binding site. FMN contacts are provided by residues 127-129, 255-256, Gly-300, 315-319, and Arg-342; these read RAS, NA, and KPTPS.

This sequence belongs to the chorismate synthase family. The cofactor is FMNH2.

It carries out the reaction 5-O-(1-carboxyvinyl)-3-phosphoshikimate = chorismate + phosphate. It participates in metabolic intermediate biosynthesis; chorismate biosynthesis; chorismate from D-erythrose 4-phosphate and phosphoenolpyruvate: step 7/7. Its function is as follows. Catalyzes the anti-1,4-elimination of the C-3 phosphate and the C-6 proR hydrogen from 5-enolpyruvylshikimate-3-phosphate (EPSP) to yield chorismate, which is the branch point compound that serves as the starting substrate for the three terminal pathways of aromatic amino acid biosynthesis. This reaction introduces a second double bond into the aromatic ring system. This Methanocaldococcus jannaschii (strain ATCC 43067 / DSM 2661 / JAL-1 / JCM 10045 / NBRC 100440) (Methanococcus jannaschii) protein is Chorismate synthase.